Reading from the N-terminus, the 413-residue chain is Multifunctional CCA protein (413 aa).

Residues Gly-8 and Arg-11 each coordinate ATP. Positions 8 and 11 each coordinate CTP. Residues Glu-21 and Asp-23 each contribute to the Mg(2+) site. Residues Arg-91, Arg-137, and Arg-140 each coordinate ATP. Positions 91, 137, and 140 each coordinate CTP. Positions 228 to 329 (TGEHTLLALA…LKLLEGLDLF (102 aa)) constitute an HD domain.

This sequence belongs to the tRNA nucleotidyltransferase/poly(A) polymerase family. Bacterial CCA-adding enzyme type 1 subfamily. In terms of assembly, monomer. Can also form homodimers and oligomers. Mg(2+) is required as a cofactor. It depends on Ni(2+) as a cofactor.

It catalyses the reaction a tRNA precursor + 2 CTP + ATP = a tRNA with a 3' CCA end + 3 diphosphate. It carries out the reaction a tRNA with a 3' CCA end + 2 CTP + ATP = a tRNA with a 3' CCACCA end + 3 diphosphate. Its function is as follows. Catalyzes the addition and repair of the essential 3'-terminal CCA sequence in tRNAs without using a nucleic acid template. Adds these three nucleotides in the order of C, C, and A to the tRNA nucleotide-73, using CTP and ATP as substrates and producing inorganic pyrophosphate. tRNA 3'-terminal CCA addition is required both for tRNA processing and repair. Also involved in tRNA surveillance by mediating tandem CCA addition to generate a CCACCA at the 3' terminus of unstable tRNAs. While stable tRNAs receive only 3'-terminal CCA, unstable tRNAs are marked with CCACCA and rapidly degraded. The polypeptide is Multifunctional CCA protein (Alkalilimnicola ehrlichii (strain ATCC BAA-1101 / DSM 17681 / MLHE-1)).